The primary structure comprises 185 residues: Signal peptidase I (185 aa).

Topologically, residues methionine 1 to alanine 20 are cytoplasmic. The helical transmembrane segment at isoleucine 21–valine 41 threads the bilayer. Residues aspartate 42–lysine 185 are Extracellular-facing. Catalysis depends on residues serine 45 and lysine 85.

The protein belongs to the peptidase S26 family.

It localises to the cell membrane. It carries out the reaction Cleavage of hydrophobic, N-terminal signal or leader sequences from secreted and periplasmic proteins.. This chain is Signal peptidase I (sipA), found in Bacillus amyloliquefaciens (Bacillus velezensis).